Here is a 490-residue protein sequence, read N- to C-terminus: JNK-interacting protein 1 (490 aa).

2 disordered regions span residues 1–71 (MADS…DHEP) and 213–254 (EDSS…PVSQ). A compositionally biased stretch (polar residues) spans 231 to 249 (GHSTAHSPNDFKSMSPQIT). The SH3 domain occupies 271-332 (MLEATHRGLH…PSAYAVDLDY (62 aa)). One can recognise a PID domain in the interval 344–479 (KERYLLGYLG…FQRFYQKFIE (136 aa)).

The protein belongs to the JIP scaffold family. As to quaternary structure, forms homo- and heterooligomeric complexes. Binds Hep, a dual specificity protein kinase in the JNK pathway, but not its downstream target bsk. The C-terminal region interacts with the kinesin light chain protein, Klc, and the C-terminal PTY motif of amyloid-beta protein precursor-like protein, Appl. In terms of tissue distribution, expressed in the brain, CNS, PNS and cells posterior to the morphogenetic furrow in the eye imaginal disk of late embryos.

It localises to the cytoplasm. The JNK-interacting protein (JIP) group of scaffold proteins selectively mediates JNK signaling by aggregating specific components of the MAPK cascade to form a functional JNK signaling module. May function as a regulator of vesicle transport, through interactions with the JNK-signaling components and motor proteins. The chain is JNK-interacting protein 1 (Aplip1) from Drosophila melanogaster (Fruit fly).